A 484-amino-acid chain; its full sequence is Bifunctional protein HldE (484 aa).

The ribokinase stretch occupies residues 1 to 320 (MDFSSITVLC…AELNAQDADA (320 aa)). 195 to 198 (NARE) provides a ligand contact to ATP. Asp-265 is an active-site residue. Residues 349–484 (FTNGCFDIIH…RIRAAGAADR (136 aa)) form a cytidylyltransferase region.

In the N-terminal section; belongs to the carbohydrate kinase PfkB family. It in the C-terminal section; belongs to the cytidylyltransferase family. As to quaternary structure, homodimer.

The enzyme catalyses D-glycero-beta-D-manno-heptose 7-phosphate + ATP = D-glycero-beta-D-manno-heptose 1,7-bisphosphate + ADP + H(+). The catalysed reaction is D-glycero-beta-D-manno-heptose 1-phosphate + ATP + H(+) = ADP-D-glycero-beta-D-manno-heptose + diphosphate. Its pathway is nucleotide-sugar biosynthesis; ADP-L-glycero-beta-D-manno-heptose biosynthesis; ADP-L-glycero-beta-D-manno-heptose from D-glycero-beta-D-manno-heptose 7-phosphate: step 1/4. It functions in the pathway nucleotide-sugar biosynthesis; ADP-L-glycero-beta-D-manno-heptose biosynthesis; ADP-L-glycero-beta-D-manno-heptose from D-glycero-beta-D-manno-heptose 7-phosphate: step 3/4. Functionally, catalyzes the phosphorylation of D-glycero-D-manno-heptose 7-phosphate at the C-1 position to selectively form D-glycero-beta-D-manno-heptose-1,7-bisphosphate. In terms of biological role, catalyzes the ADP transfer from ATP to D-glycero-beta-D-manno-heptose 1-phosphate, yielding ADP-D-glycero-beta-D-manno-heptose. In Gluconacetobacter diazotrophicus (strain ATCC 49037 / DSM 5601 / CCUG 37298 / CIP 103539 / LMG 7603 / PAl5), this protein is Bifunctional protein HldE.